Reading from the N-terminus, the 632-residue chain is tRNA uridine 5-carboxymethylaminomethyl modification enzyme MnmG (632 aa).

FAD-binding positions include 15 to 20, V127, and S182; that span reads GAGHAG. The segment at 203 to 226 is disordered; that stretch reads TPPRVKSSTIDYSKTEEQPGDDHP. The segment covering 215–226 has biased composition (basic and acidic residues); that stretch reads SKTEEQPGDDHP. 274 to 288 provides a ligand contact to NAD(+); the sequence is GARYCPSIEDKIVRF. Residue Q371 coordinates FAD.

This sequence belongs to the MnmG family. In terms of assembly, homodimer. Heterotetramer of two MnmE and two MnmG subunits. FAD is required as a cofactor.

The protein resides in the cytoplasm. Functionally, NAD-binding protein involved in the addition of a carboxymethylaminomethyl (cmnm) group at the wobble position (U34) of certain tRNAs, forming tRNA-cmnm(5)s(2)U34. The polypeptide is tRNA uridine 5-carboxymethylaminomethyl modification enzyme MnmG (Listeria monocytogenes serotype 4b (strain F2365)).